The chain runs to 427 residues: 3-phosphoshikimate 1-carboxyvinyltransferase (427 aa).

3-phosphoshikimate-binding residues include lysine 20, serine 21, and arginine 25. Residue lysine 20 coordinates phosphoenolpyruvate. Phosphoenolpyruvate-binding residues include glycine 92 and arginine 120. 4 residues coordinate 3-phosphoshikimate: serine 166, glutamine 168, aspartate 312, and lysine 339. Glutamine 168 serves as a coordination point for phosphoenolpyruvate. Catalysis depends on aspartate 312, which acts as the Proton acceptor. Positions 343 and 385 each coordinate phosphoenolpyruvate.

This sequence belongs to the EPSP synthase family. In terms of assembly, monomer.

The protein localises to the cytoplasm. It catalyses the reaction 3-phosphoshikimate + phosphoenolpyruvate = 5-O-(1-carboxyvinyl)-3-phosphoshikimate + phosphate. Its pathway is metabolic intermediate biosynthesis; chorismate biosynthesis; chorismate from D-erythrose 4-phosphate and phosphoenolpyruvate: step 6/7. Its function is as follows. Catalyzes the transfer of the enolpyruvyl moiety of phosphoenolpyruvate (PEP) to the 5-hydroxyl of shikimate-3-phosphate (S3P) to produce enolpyruvyl shikimate-3-phosphate and inorganic phosphate. In Streptococcus pyogenes serotype M28 (strain MGAS6180), this protein is 3-phosphoshikimate 1-carboxyvinyltransferase.